Consider the following 228-residue polypeptide: Large ribosomal subunit protein uL3 (228 aa).

Q151 is modified (N5-methylglutamine).

The protein belongs to the universal ribosomal protein uL3 family. In terms of assembly, part of the 50S ribosomal subunit. Forms a cluster with proteins L14 and L19. Methylated by PrmB.

Its function is as follows. One of the primary rRNA binding proteins, it binds directly near the 3'-end of the 23S rRNA, where it nucleates assembly of the 50S subunit. In Rhizobium meliloti (strain 1021) (Ensifer meliloti), this protein is Large ribosomal subunit protein uL3.